The following is a 42-amino-acid chain: Tachystatin-B2 (42 aa).

Cystine bridges form between Cys4–Cys20, Cys11–Cys25, and Cys19–Cys37.

Granular hemocytes, small secretory granules.

The protein resides in the secreted. Its function is as follows. Exhibits stronger antimicrobial activity against the Gram-positive bacteria (S.aureus (IC(50) is 7.4 ug/ml)) and fungi (C.albicans (IC(50) is 3.0 ug/ml) and P.pastoris (IC(50) is 0.1 ug/ml)) than Gram-negative bacteria (E.coli no inhibition at 100 ug/ml). Binds to chitin (4.3 uM are required to obtain 50% of binding). Does not cause hemolysis on sheep erythrocytes. Has no blocking activity on the P-type calcium channel. This is Tachystatin-B2 from Tachypleus tridentatus (Japanese horseshoe crab).